The chain runs to 1238 residues: Protein translocase subunit SecA 1 (1238 aa).

ATP is bound by residues glutamine 107, 125 to 129 (GEGKT), and aspartate 570. A disordered region spans residues 1194–1220 (AAGSEGRAEGSVDTVRVEEPRIGRNAP). Residues 1199 to 1215 (GRAEGSVDTVRVEEPRI) show a composition bias toward basic and acidic residues. Zn(2+) is bound by residues cysteine 1221, cysteine 1223, cysteine 1232, and cysteine 1233.

Belongs to the SecA family. In terms of assembly, monomer and homodimer. Part of the essential Sec protein translocation apparatus which comprises SecA, SecYEG and auxiliary proteins SecDF. Other proteins may also be involved. Zn(2+) serves as cofactor.

It localises to the cell inner membrane. It is found in the cytoplasm. The catalysed reaction is ATP + H2O + cellular proteinSide 1 = ADP + phosphate + cellular proteinSide 2.. In terms of biological role, part of the Sec protein translocase complex. Interacts with the SecYEG preprotein conducting channel. Has a central role in coupling the hydrolysis of ATP to the transfer of proteins into and across the cell membrane, serving as an ATP-driven molecular motor driving the stepwise translocation of polypeptide chains across the membrane. This is Protein translocase subunit SecA 1 from Rhodopirellula baltica (strain DSM 10527 / NCIMB 13988 / SH1).